A 508-amino-acid chain; its full sequence is Photosystem II CP47 reaction center protein (508 aa).

6 helical membrane passes run 21-36 (SVHIMHTALVAGWAGS), 101-115 (IVFSGLCFLAAIWHW), 140-156 (GIHLFLSGVACFGFGAF), 203-218 (IAAGTLGILAGLFHLS), 237-252 (VLSSSIAAVFFAAFVV), and 457-472 (SFALLFFFGHIWHGSR).

Belongs to the PsbB/PsbC family. PsbB subfamily. PSII is composed of 1 copy each of membrane proteins PsbA, PsbB, PsbC, PsbD, PsbE, PsbF, PsbH, PsbI, PsbJ, PsbK, PsbL, PsbM, PsbT, PsbX, PsbY, PsbZ, Psb30/Ycf12, at least 3 peripheral proteins of the oxygen-evolving complex and a large number of cofactors. It forms dimeric complexes. Binds multiple chlorophylls. PSII binds additional chlorophylls, carotenoids and specific lipids. is required as a cofactor.

The protein resides in the plastid. Its subcellular location is the chloroplast thylakoid membrane. One of the components of the core complex of photosystem II (PSII). It binds chlorophyll and helps catalyze the primary light-induced photochemical processes of PSII. PSII is a light-driven water:plastoquinone oxidoreductase, using light energy to abstract electrons from H(2)O, generating O(2) and a proton gradient subsequently used for ATP formation. The polypeptide is Photosystem II CP47 reaction center protein (Fagopyrum esculentum subsp. ancestrale (Wild buckwheat)).